The following is a 476-amino-acid chain: Chromosomal replication initiator protein DnaA (476 aa).

The interval 1-75 (MLAPDTFWLA…TQMAENHFAR (75 aa)) is domain I, interacts with DnaA modulators. The segment at 75 to 139 (RPVQLQLELA…AKEKQEKNPT (65 aa)) is domain II. Residues 110 to 141 (FDAPTESAQKAPKDTKDTKDAKEKQEKNPTRL) form a disordered region. Residues 120–138 (APKDTKDTKDAKEKQEKNP) show a composition bias toward basic and acidic residues. Residues 140–356 (RLNPSFTFNT…GALKRVVAYS (217 aa)) form a domain III, AAA+ region region. The ATP site is built by Gly184, Gly186, Lys187, and Thr188. The segment at 357–476 (RFTGHALTLD…FNTLLHILRG (120 aa)) is domain IV, binds dsDNA.

It belongs to the DnaA family. In terms of assembly, oligomerizes as a right-handed, spiral filament on DNA at oriC.

It is found in the cytoplasm. Its function is as follows. Plays an essential role in the initiation and regulation of chromosomal replication. ATP-DnaA binds to the origin of replication (oriC) to initiate formation of the DNA replication initiation complex once per cell cycle. Binds the DnaA box (a 9 base pair repeat at the origin) and separates the double-stranded (ds)DNA. Forms a right-handed helical filament on oriC DNA; dsDNA binds to the exterior of the filament while single-stranded (ss)DNA is stabiized in the filament's interior. The ATP-DnaA-oriC complex binds and stabilizes one strand of the AT-rich DNA unwinding element (DUE), permitting loading of DNA polymerase. After initiation quickly degrades to an ADP-DnaA complex that is not apt for DNA replication. Binds acidic phospholipids. The chain is Chromosomal replication initiator protein DnaA from Nitrosospira multiformis (strain ATCC 25196 / NCIMB 11849 / C 71).